We begin with the raw amino-acid sequence, 374 residues long: Glutamate 5-kinase (374 aa).

Lysine 13 provides a ligand contact to ATP. The substrate site is built by serine 54, aspartate 141, and asparagine 153. 173–174 (SD) provides a ligand contact to ATP. Positions 278–355 (KGTVHLDSGA…NEIESVLGYP (78 aa)) constitute a PUA domain.

This sequence belongs to the glutamate 5-kinase family.

The protein localises to the cytoplasm. It catalyses the reaction L-glutamate + ATP = L-glutamyl 5-phosphate + ADP. It functions in the pathway amino-acid biosynthesis; L-proline biosynthesis; L-glutamate 5-semialdehyde from L-glutamate: step 1/2. In terms of biological role, catalyzes the transfer of a phosphate group to glutamate to form L-glutamate 5-phosphate. The sequence is that of Glutamate 5-kinase from Roseobacter denitrificans (strain ATCC 33942 / OCh 114) (Erythrobacter sp. (strain OCh 114)).